We begin with the raw amino-acid sequence, 173 residues long: Photosystem I assembly protein Ycf3 (173 aa).

TPR repeat units follow at residues 35 to 68, 72 to 105, and 120 to 153; these read AYVY…ETDP, GETL…NPKQ, and GRIA…NPGG.

It belongs to the Ycf3 family.

Its subcellular location is the cellular thylakoid membrane. Its function is as follows. Essential for the assembly of the photosystem I (PSI) complex. May act as a chaperone-like factor to guide the assembly of the PSI subunits. The polypeptide is Photosystem I assembly protein Ycf3 (Synechococcus sp. (strain CC9902)).